Consider the following 173-residue polypeptide: Photosystem I assembly protein Ycf3 (173 aa).

TPR repeat units follow at residues 35–68, 72–105, and 120–153; these read AYIY…EENP, GETL…NPKQ, and GRSA…YPGG.

Belongs to the Ycf3 family.

It is found in the cellular thylakoid membrane. Essential for the assembly of the photosystem I (PSI) complex. May act as a chaperone-like factor to guide the assembly of the PSI subunits. This Prochlorococcus marinus (strain MIT 9211) protein is Photosystem I assembly protein Ycf3.